Here is a 188-residue protein sequence, read N- to C-terminus: Ribosome-recycling factor (188 aa).

Belongs to the RRF family.

It is found in the cytoplasm. Functionally, responsible for the release of ribosomes from messenger RNA at the termination of protein biosynthesis. May increase the efficiency of translation by recycling ribosomes from one round of translation to another. This is Ribosome-recycling factor from Dinoroseobacter shibae (strain DSM 16493 / NCIMB 14021 / DFL 12).